Reading from the N-terminus, the 456-residue chain is Acyl-CoA transferase FPSE_08120 (456 aa).

Residues 1-33 constitute a mitochondrion transit peptide; sequence MARLLFSGQRLRPSFLRSYIRANPSSTPSATRA.

Belongs to the CoA-transferase III family.

Its subcellular location is the mitochondrion. In terms of biological role, acyl-CoA transferase; part of the Fusarium detoxification of benzoxazolinone cluster involved in the degradation of benzoxazolinones produced by the host plant. Maize, wheat, and rye produce the 2 benzoxazinone phytoanticipins 2,4-dihy-droxy-7-methoxy-1,4-benzoxazin-3-one (DIMBOA) and 2,4-dihydroxy-1,4-benzoxazin-3-one (DIBOA) that, due to their inherent instability once released, spontaneously degrade to the more stable corresponding benzoxazolinones, 6-methoxy-2-benzoxazolinone (MBOA) and 2-benzoxazolinone (BOA), respectively. The first step in the detoxification of benzoxazolinones involves the hydrolysis of the cyclic ester bond of benzoxazolinones by the gamma-lactamase FDB1 to aminophenols. FDB1 is able to convert 2-benzoxazolinone (BOA) into 2-aminophenol (2-AP), as well as 6-methoxy-2-benzoxazolinone (MBOA) into 5-methoxy-2-aminophenol (2-AMP). The N-malonyltransferase FDB2 then metabolizes aminophenols via N-malonylation to non-toxic malonamic acids. FDB2 converts 2-AP into N-(2-hydroxyphenyl) malonamic acid (HPMA) and 2-AMP into N-(2-hydroxy-4-methoxyphenyl) malonamic acid (HMPMA). The cluster also contains 2 transcription factors (FDB3 and FPSE_08121), an aldo-keto reductase (FPSE_08125) that possibly associates with a ketone component of BOA and MBOA degradation, an esterase (FPSE_08126), an acyl-CoA transferase (FPSE_08120), a solute carrier protein (FPSE_08119) and a transmembrane transporter (FPSE_08127) proposed to shuttle metabolites of benzoxazolinone degradation. The chain is Acyl-CoA transferase FPSE_08120 from Fusarium pseudograminearum (strain CS3096) (Wheat and barley crown-rot fungus).